The following is a 507-amino-acid chain: tRNA (guanine(10)-N(2))-methyltransferase TRMT11 (507 aa).

The span at 459–475 (EKTKKKEQKKKSVENHL) shows a compositional bias: basic and acidic residues. Residues 459–507 (EKTKKKEQKKKSVENHLKSKNNNDVINNNSNDTNSNNNCNNENNIENQK) are disordered. Positions 480-507 (NNDVINNNSNDTNSNNNCNNENNIENQK) are enriched in low complexity.

Belongs to the class I-like SAM-binding methyltransferase superfamily. TRM11 methyltransferase family. Part of the heterodimeric TRMT11-TRM112 methyltransferase complex; this complex forms an active tRNA methyltransferase, where TRMT112 acts as an activator of the catalytic subunit TRMT11.

The protein localises to the cytoplasm. It catalyses the reaction guanosine(10) in tRNA + S-adenosyl-L-methionine = N(2)-methylguanosine(10) in tRNA + S-adenosyl-L-homocysteine + H(+). Functionally, catalytic subunit of the TRMT11-TRM112 methyltransferase complex, that specifically mediates the S-adenosyl-L-methionine-dependent N(2)-methylation of guanosine nucleotide at position 10 (m2G10) in tRNAs. This is one of the major tRNA (guanine-N(2))-methyltransferases. The sequence is that of tRNA (guanine(10)-N(2))-methyltransferase TRMT11 (trmt11) from Dictyostelium discoideum (Social amoeba).